The chain runs to 137 residues: Phosphoribosyl-AMP cyclohydrolase (137 aa).

Mg(2+) is bound at residue Asp-84. Cys-85 is a binding site for Zn(2+). Mg(2+) contacts are provided by Asp-86 and Asp-88. Zn(2+) contacts are provided by Cys-101 and Cys-108.

Belongs to the PRA-CH family. As to quaternary structure, homodimer. Requires Mg(2+) as cofactor. Zn(2+) is required as a cofactor.

The protein resides in the cytoplasm. It carries out the reaction 1-(5-phospho-beta-D-ribosyl)-5'-AMP + H2O = 1-(5-phospho-beta-D-ribosyl)-5-[(5-phospho-beta-D-ribosylamino)methylideneamino]imidazole-4-carboxamide. Its pathway is amino-acid biosynthesis; L-histidine biosynthesis; L-histidine from 5-phospho-alpha-D-ribose 1-diphosphate: step 3/9. Functionally, catalyzes the hydrolysis of the adenine ring of phosphoribosyl-AMP. The sequence is that of Phosphoribosyl-AMP cyclohydrolase from Chlorobium phaeobacteroides (strain DSM 266 / SMG 266 / 2430).